Reading from the N-terminus, the 33-residue chain is Cytochrome b6-f complex subunit 8 (33 aa).

A helical transmembrane segment spans residues Leu-2–Val-22.

Belongs to the PetN family. In terms of assembly, the 4 large subunits of the cytochrome b6-f complex are cytochrome b6, subunit IV (17 kDa polypeptide, PetD), cytochrome f and the Rieske protein, while the 4 small subunits are PetG, PetL, PetM and PetN. The complex functions as a dimer.

It is found in the cellular thylakoid membrane. Its function is as follows. Component of the cytochrome b6-f complex, which mediates electron transfer between photosystem II (PSII) and photosystem I (PSI), cyclic electron flow around PSI, and state transitions. The polypeptide is Cytochrome b6-f complex subunit 8 (Synechococcus sp. (strain CC9605)).